The sequence spans 470 residues: Uronate isomerase (470 aa).

The protein belongs to the metallo-dependent hydrolases superfamily. Uronate isomerase family.

It catalyses the reaction D-glucuronate = D-fructuronate. The catalysed reaction is aldehydo-D-galacturonate = keto-D-tagaturonate. Its pathway is carbohydrate metabolism; pentose and glucuronate interconversion. The polypeptide is Uronate isomerase (Vibrio parahaemolyticus serotype O3:K6 (strain RIMD 2210633)).